Reading from the N-terminus, the 285-residue chain is Para-Rep C6 (285 aa).

Residues 3-99 enclose the CRESS-DNA virus Rep endonuclease domain; that stretch reads TRQSTSWVFT…VAGPWEYGLF (97 aa). Residues 10–13 carry the RCR-1 motif; sequence VFTL. A divalent metal cation-binding residues include Glu36 and His42. The RCR-2 signature appears at 42–44; that stretch reads HLQ. Positions 52 to 74 match the Nuclear localization signal motif; the sequence is RNTTLRQAKYIFNGLNPHLEIAR. Catalysis depends on Tyr82, which acts as the For DNA cleavage activity. An RCR-3 motif is present at residues 82-85; it reads YAMK. An a divalent metal cation-binding site is contributed by Asp87. Positions 99–105 match the Nuclear localization signal motif; the sequence is FIKRGSH. Residue 175 to 183 coordinates ATP; that stretch reads GPAGNEGKS.

Belongs to the nanoviridea/circoviridae replication-associated protein family. Homooligomer (Potential). Rep binds to repeated DNA motifs (iterons). The cofactor is Mg(2+). Mn(2+) serves as cofactor.

It is found in the host nucleus. It catalyses the reaction ATP + H2O = ADP + phosphate + H(+). Its function is as follows. Initiates and terminates the replication only of its own subviral DNA molecule. The closed circular ssDNA genome is first converted to a superhelical dsDNA. Rep binds a specific hairpin at the genome origin of replication. Introduces an endonucleolytic nick within the intergenic region of the genome, thereby initiating the rolling circle replication (RCR). Following cleavage, binds covalently to the 5'-phosphate of DNA as a tyrosyl ester. The cleavage gives rise to a free 3'-OH that serves as a primer for the cellular DNA polymerase. The polymerase synthesizes the (+) strand DNA by rolling circle mechanism. After one round of replication, a Rep-catalyzed nucleotidyl transfer reaction releases a circular single-stranded virus genome, thereby terminating the replication. Displays origin-specific DNA cleavage, nucleotidyl transferase, ATPase and helicase activities. In Subterranean clover stunt C6 alphasatellite (SCSC6A), this protein is Para-Rep C6 (C6).